Here is a 298-residue protein sequence, read N- to C-terminus: Serine/threonine-protein kinase 1 (298 aa).

Positions 38–276 constitute a Protein kinase domain; sequence FIATRPMFEG…FKSLVSHPWF (239 aa). Residues 45–53 and Lys65 contribute to the ATP site; that span reads FEGGRNNVF. Asp152 acts as the Proton acceptor in catalysis.

Belongs to the protein kinase superfamily. Ser/Thr protein kinase family.

It localises to the virion. Its subcellular location is the host cytoplasm. The catalysed reaction is L-seryl-[protein] + ATP = O-phospho-L-seryl-[protein] + ADP + H(+). The enzyme catalyses L-threonyl-[protein] + ATP = O-phospho-L-threonyl-[protein] + ADP + H(+). Functionally, essential for viral replication. It may mediate the virus progression through DNA replication. The sequence is that of Serine/threonine-protein kinase 1 from African swine fever virus (strain Badajoz 1971 Vero-adapted) (Ba71V).